Reading from the N-terminus, the 122-residue chain is Holo-[acyl-carrier-protein] synthase (122 aa).

Residues Asp8 and Glu57 each coordinate Mg(2+).

It belongs to the P-Pant transferase superfamily. AcpS family. Mg(2+) is required as a cofactor.

The protein resides in the cytoplasm. The enzyme catalyses apo-[ACP] + CoA = holo-[ACP] + adenosine 3',5'-bisphosphate + H(+). Its function is as follows. Transfers the 4'-phosphopantetheine moiety from coenzyme A to a Ser of acyl-carrier-protein. The sequence is that of Holo-[acyl-carrier-protein] synthase from Protochlamydia amoebophila (strain UWE25).